Here is a 202-residue protein sequence, read N- to C-terminus: Recombination protein RecR (202 aa).

The C4-type zinc finger occupies 61–76 (CARCNSFTEDDICATC). Residues 84-179 (SVLCVVETPA…KVTRLARGVP (96 aa)) enclose the Toprim domain.

Belongs to the RecR family.

In terms of biological role, may play a role in DNA repair. It seems to be involved in an RecBC-independent recombinational process of DNA repair. It may act with RecF and RecO. This chain is Recombination protein RecR, found in Bordetella petrii (strain ATCC BAA-461 / DSM 12804 / CCUG 43448).